Here is a 156-residue protein sequence, read N- to C-terminus: Ribonuclease ageritin (156 aa).

Positions 1–21 (MSESSTFTTAVVPEGEGVAPM) are cleaved as a signal peptide. The active site involves His-98. Residues Asn-100 and Asn-139 are each glycosylated (N-linked (GlcNAc...) asparagine).

The protein belongs to the ribotoxin-like family. In terms of assembly, monomer. Requires Mg(2+) as cofactor.

The protein localises to the vacuole lumen. The catalysed reaction is a 28S rRNA containing guanosine-adenosine pair + H2O = an [RNA fragment]-3'-adenosine-3'-phosphate + a 5'-a hydroxy-guanosine-3'-[RNA fragment].. With respect to regulation, in contrast to most ribotoxins, activity is completely inhibited by EDTA. Functionally, fungal ribonuclease involved in fungal defense. Highly specific and highly toxic fungal endonuclease that cleaves a single phosphodiester bond in the 28S RNA of eukaryotic ribosomes at a universally conserved GAGA tetraloop of the sarcin-ricin loop (SRL). The damage of the SRL inhibits the binding of translation elongation factors and halts protein biosynthesis, ultimately resulting in the death of the target cells. Shows antitumor activity. Exerts cytotoxicity and induces apoptosis towards rat glial cells and human glioma cells, and also displays some activity towards human neurolastoma cell lines. Shows a strong entomotoxicity against Aedes aegypti larvae, yet no nematotoxicity against nematodes. The protein is Ribonuclease ageritin of Cyclocybe aegerita (Black poplar mushroom).